A 450-amino-acid chain; its full sequence is Glucose-6-phosphate isomerase (450 aa).

Phosphothreonine is present on Thr38. Catalysis depends on Glu290, which acts as the Proton donor. Active-site residues include His311 and Lys425.

The protein belongs to the GPI family.

The protein resides in the cytoplasm. It catalyses the reaction alpha-D-glucose 6-phosphate = beta-D-fructose 6-phosphate. Its pathway is carbohydrate biosynthesis; gluconeogenesis. It functions in the pathway carbohydrate degradation; glycolysis; D-glyceraldehyde 3-phosphate and glycerone phosphate from D-glucose: step 2/4. Functionally, catalyzes the reversible isomerization of glucose-6-phosphate to fructose-6-phosphate. The polypeptide is Glucose-6-phosphate isomerase (Bacillus licheniformis (strain ATCC 14580 / DSM 13 / JCM 2505 / CCUG 7422 / NBRC 12200 / NCIMB 9375 / NCTC 10341 / NRRL NRS-1264 / Gibson 46)).